The following is a 270-amino-acid chain: Checkpoint signal transducer rad25 (270 aa).

Phosphoserine is present on residues Ser234 and Ser253. The tract at residues 240–270 (QSAKEEAPAAAAASENEHPEPKESTTDTVKA) is disordered. Basic and acidic residues predominate over residues 254–270 (ENEHPEPKESTTDTVKA).

It belongs to the 14-3-3 family. In terms of assembly, interacts with rad24. Interacts with byr2.

The protein resides in the cytoplasm. In terms of biological role, acts in cell cycle and stress checkpoint signaling by sequestering signal transducers regulated by the checkpoints. Required for the DNA damage checkpoint that ensures that DNA damage is repaired before mitosis is attempted. Sequesters byr2 in the cytoplasm to prevent its translocation to the plasma membrane. This Schizosaccharomyces pombe (strain 972 / ATCC 24843) (Fission yeast) protein is Checkpoint signal transducer rad25.